A 102-amino-acid polypeptide reads, in one-letter code: Large ribosomal subunit protein mL63 (102 aa).

The protein belongs to the mitochondrion-specific ribosomal protein mL63 family. In terms of assembly, component of the mitochondrial large ribosomal subunit (mt-LSU). Mature mammalian 55S mitochondrial ribosomes consist of a small (28S) and a large (39S) subunit. The 28S small subunit contains a 12S ribosomal RNA (12S mt-rRNA) and 30 different proteins. The 39S large subunit contains a 16S rRNA (16S mt-rRNA), a copy of mitochondrial valine transfer RNA (mt-tRNA(Val)), which plays an integral structural role, and 52 different proteins.

It is found in the mitochondrion. The sequence is that of Large ribosomal subunit protein mL63 (MRPL57) from Homo sapiens (Human).